The sequence spans 279 residues: Tryptophan synthase alpha chain (279 aa).

Catalysis depends on proton acceptor residues glutamate 50 and aspartate 61.

This sequence belongs to the TrpA family. In terms of assembly, tetramer of two alpha and two beta chains.

It catalyses the reaction (1S,2R)-1-C-(indol-3-yl)glycerol 3-phosphate + L-serine = D-glyceraldehyde 3-phosphate + L-tryptophan + H2O. The protein operates within amino-acid biosynthesis; L-tryptophan biosynthesis; L-tryptophan from chorismate: step 5/5. In terms of biological role, the alpha subunit is responsible for the aldol cleavage of indoleglycerol phosphate to indole and glyceraldehyde 3-phosphate. The protein is Tryptophan synthase alpha chain of Brucella anthropi (strain ATCC 49188 / DSM 6882 / CCUG 24695 / JCM 21032 / LMG 3331 / NBRC 15819 / NCTC 12168 / Alc 37) (Ochrobactrum anthropi).